Here is a 178-residue protein sequence, read N- to C-terminus: Stage V sporulation protein T (178 aa).

Residues 5 to 51 form the SpoVT-AbrB domain; the sequence is GIVRRIDDLGRVVIPKEIRRTLRIREGDPLEIFVDRDGEVILKKYSP. The GAF-like stretch occupies residues 56–178; it reads GDFAKEYADA…AGFLARQMEQ (123 aa).

To B.subtilis AbrB and Abh. As to quaternary structure, homotetramer. Two monomers dimerize via their N-terminal swapped-hairpin domains. These dimers further associate into tetramers through helical interactions between their C-terminal GAF-like domains.

In terms of biological role, transcriptional factor that positively regulates or negatively the expression of a large number of forespore-specific sigma G-dependent genes. May provide a mechanism of feedback control that is important for forespore development. SpoVT levels during spore formation have a major impact on the germination and the resistance of the resultant spores. This chain is Stage V sporulation protein T, found in Bacillus subtilis (strain 168).